We begin with the raw amino-acid sequence, 402 residues long: AA9 family lytic polysaccharide monooxygenase E (402 aa).

An N-terminal signal peptide occupies residues 1–16; the sequence is MSRLVSFASLLAAVNA. His17 contributes to the Cu(2+) binding site. Disulfide bonds link Cys72/Cys194 and Cys113/Cys117. N-linked (GlcNAc...) asparagine glycosylation occurs at Asn75. Cu(2+) is bound at residue His102. The N-linked (GlcNAc...) asparagine glycan is linked to Asn154. Residues His180 and Gln189 each contribute to the O2 site. Tyr191 provides a ligand contact to Cu(2+). A CBM1 domain is found at 364-400; it reads GSNPLYAQCGGLNFKGASGCVAGATCKKMNPYYSQCV.

Belongs to the polysaccharide monooxygenase AA9 family. The cofactor is Cu(2+).

The protein localises to the secreted. The enzyme catalyses [(1-&gt;4)-beta-D-glucosyl]n+m + reduced acceptor + O2 = 4-dehydro-beta-D-glucosyl-[(1-&gt;4)-beta-D-glucosyl]n-1 + [(1-&gt;4)-beta-D-glucosyl]m + acceptor + H2O.. In terms of biological role, lytic polysaccharide monooxygenase (LPMO) that depolymerizes crystalline and amorphous polysaccharides via the oxidation of scissile alpha- or beta-(1-4)-glycosidic bonds, yielding C1 or C4 oxidation products. Catalysis by LPMOs requires the reduction of the active-site copper from Cu(II) to Cu(I) by a reducing agent and H(2)O(2) or O(2) as a cosubstrate. The sequence is that of AA9 family lytic polysaccharide monooxygenase E from Emericella nidulans (strain FGSC A4 / ATCC 38163 / CBS 112.46 / NRRL 194 / M139) (Aspergillus nidulans).